A 1133-amino-acid polypeptide reads, in one-letter code: Fas-binding factor 1 (1133 aa).

Disordered regions lie at residues 89–198 (LGLK…TPIR) and 211–544 (IMAT…VPVQ). Residues 102–113 (AAKDPGKGELPN) show a composition bias toward basic and acidic residues. Over residues 125–134 (KKSLPSPSSS) the composition is skewed to low complexity. Ser142 bears the Phosphoserine mark. The segment covering 165–182 (PPVTQSKTASDKSPSTVR) has biased composition (polar residues). Basic and acidic residues-rich tracts occupy residues 221–245 (PKAE…DELL) and 259–276 (TGEH…RPQD). The span at 277 to 286 (SEDMWGDEDF) shows a compositional bias: acidic residues. The span at 295–310 (VVSSEGRQSRRQSVSR) shows a compositional bias: low complexity. Residues 325–336 (SKQSPPMASSPI) show a composition bias toward polar residues. The span at 415 to 424 (ASKEEKEDWL) shows a compositional bias: basic and acidic residues. Polar residues predominate over residues 459 to 469 (SGSQPLTSTQG). The segment covering 473–482 (AAAGGSSGTT) has biased composition (low complexity). Coiled-coil stretches lie at residues 577 to 727 (AELQ…VDAA) and 773 to 870 (IRQR…EEQK). A Glycyl lysine isopeptide (Lys-Gly) (interchain with G-Cter in SUMO2) cross-link involves residue Lys960. The disordered stretch occupies residues 1062–1085 (AASSQSALMPPAPTTRWCSQPPTG).

May interact with FAS cytoplasmic domain. Interacts with PARD3. Interacts with TRAPPC14. As to expression, present in various epithelial cells (at protein level).

The protein resides in the cytoplasm. It localises to the cytoskeleton. The protein localises to the microtubule organizing center. It is found in the centrosome. Its subcellular location is the centriole. The protein resides in the spindle pole. It localises to the cell junction. Functionally, keratin-binding protein required for epithelial cell polarization. Involved in apical junction complex (AJC) assembly via its interaction with PARD3. Required for ciliogenesis. This Homo sapiens (Human) protein is Fas-binding factor 1 (FBF1).